The sequence spans 557 residues: Dihydroxy-acid dehydratase (557 aa).

Residue cysteine 47 participates in [2Fe-2S] cluster binding. Aspartate 79 is a binding site for Mg(2+). Cysteine 120 provides a ligand contact to [2Fe-2S] cluster. Mg(2+) is bound by residues aspartate 121 and lysine 122. Lysine 122 is subject to N6-carboxylysine. Cysteine 192 is a binding site for [2Fe-2S] cluster. Glutamate 444 is a Mg(2+) binding site. Serine 470 (proton acceptor) is an active-site residue.

This sequence belongs to the IlvD/Edd family. As to quaternary structure, homodimer. It depends on [2Fe-2S] cluster as a cofactor. Mg(2+) serves as cofactor.

The enzyme catalyses (2R)-2,3-dihydroxy-3-methylbutanoate = 3-methyl-2-oxobutanoate + H2O. It catalyses the reaction (2R,3R)-2,3-dihydroxy-3-methylpentanoate = (S)-3-methyl-2-oxopentanoate + H2O. It participates in amino-acid biosynthesis; L-isoleucine biosynthesis; L-isoleucine from 2-oxobutanoate: step 3/4. It functions in the pathway amino-acid biosynthesis; L-valine biosynthesis; L-valine from pyruvate: step 3/4. In terms of biological role, functions in the biosynthesis of branched-chain amino acids. Catalyzes the dehydration of (2R,3R)-2,3-dihydroxy-3-methylpentanoate (2,3-dihydroxy-3-methylvalerate) into 2-oxo-3-methylpentanoate (2-oxo-3-methylvalerate) and of (2R)-2,3-dihydroxy-3-methylbutanoate (2,3-dihydroxyisovalerate) into 2-oxo-3-methylbutanoate (2-oxoisovalerate), the penultimate precursor to L-isoleucine and L-valine, respectively. The sequence is that of Dihydroxy-acid dehydratase from Parasynechococcus marenigrum (strain WH8102).